We begin with the raw amino-acid sequence, 570 residues long: MIPPEIRRSVLLQKAIKLALAGTLLTFASFSATAADPSSDTETPQPPDILLGPLFNDVQNAKLFPDQKTFADAIPNSDPLMILADYRMQRNQSGFDLRHFVDVNFTLPKAGEKYVPPAGQSLREHIDGLWPVLTRSTKNVEKWDSLLPLPESYVVPGGRFREIYYWDSYFTMLGLAESGHWDKVADMVANFGYEIDAWGHIPNGNRTYYLSRSQPPFFAFMVELLAQHEGDDALKEYLPQLQKEYAYWMEGVETLQPGQQNQRVVKLEDGSVLNRYWDDRDTPRPESWVEDIATAKSNPNRPATEIYRDLRSAAASGWDFSSRWMDNPQQLSTIRTTTIVPVDLNALLYQLEKTLARASAAAGDRAKASHYDALANARQQAIEMHLWNNKEGWYADYDLKNNKIRDQLTAAALFPLYVNAAAKDRAAKVAAAAQAHLLQPGGLATTSVKSGQQWDAPNGWAPLQWVAAEGLQNYGQDDVAMEVTWRFLTNVQHTYDREKKLVEKYDVSSTGTGGGGGEYPLQDGFGWTNGVTLKMLDLICPQEKPCDSVPSTRPASLSATPTKTPSAATQ.

The signal sequence occupies residues 1-34 (MIPPEIRRSVLLQKAIKLALAGTLLTFASFSATA). Residues Arg-159, 166–167 (WD), Asn-203, 212–214 (RSQ), 284–286 (RPE), and Gly-317 each bind substrate. Residues Asp-319 and Glu-503 each act as proton donor/acceptor in the active site. Glu-518 lines the substrate pocket. A disordered region spans residues 544-570 (KPCDSVPSTRPASLSATPTKTPSAATQ). Residues 554-570 (PASLSATPTKTPSAATQ) show a composition bias toward low complexity.

The protein belongs to the glycosyl hydrolase 37 family. In terms of assembly, monomer.

Its subcellular location is the periplasm. It catalyses the reaction alpha,alpha-trehalose + H2O = alpha-D-glucose + beta-D-glucose. Functionally, provides the cells with the ability to utilize trehalose at high osmolarity by splitting it into glucose molecules that can subsequently be taken up by the phosphotransferase-mediated uptake system. In Salmonella paratyphi B (strain ATCC BAA-1250 / SPB7), this protein is Periplasmic trehalase.